The chain runs to 548 residues: MALHVPKAPGFAQMLKDGAKHFSGLEEAVYRNIQACKELAQTTRTAYGPNGMNKMVINRLEKLFVTNDAATILRELEVQHPAAKMIVMASHMQEQEVGDGTNFVLVFAGALLELAEELLRIGLSVSEVISGYEIACKKAHEILPELVCCSAKNLRDVDEVSSLLRTSIMSKQYGSETFLAKLIAQACVSIFPDSGNFNVDNIRVCKILGSGIYSSSVLHGMVFKKETEGDVTSVKDAKIAVYSCPFDGMITETKGTVLIKTAEELMNFSKGEENLMDAQVKAIAGTGANVIVTGGKVADIALHYANKYNIMLVRLNSKWDLRRLCKTVGATALPKLTPPVQEEMGHCDSVYLSEVGDTQVVVFKHEKEDGAISTIVLRGSTDNLMDDIERAVDDGVNTFKVLTRDKRLVPGGGATEIELAKQITSYGETCPGLEQYAIKKFAEAFEAIPRALAENSGVKANEVISKLYSVHQEGNKNVGLDIEAEVPAVKDMLEASILDTYLGKYWAIKLATNAAVTVLRVDQIIMAKPAGGPKPPSGKKDWDDDQND.

At A2 the chain carries N-acetylalanine. Residue S23 is modified to Phosphoserine. Y30 bears the Phosphotyrosine mark. Positions 47 and 48 each coordinate ADP. A Mg(2+)-binding site is contributed by D99. ADP-binding residues include G100, T101, N102, and F103. Residues G100, T101, and N102 each coordinate ATP. The residue at position 162 (S162) is a Phosphoserine. Residues M169, S170, and K171 each contribute to the ADP site. Positions 170 and 171 each coordinate ATP. Residues K224, K254, and K260 each participate in a glycyl lysine isopeptide (Lys-Gly) (interchain with G-Cter in SUMO2) cross-link. Residues S269 and S317 each carry the phosphoserine modification. N6-acetyllysine occurs at positions 318 and 400. G412 provides a ligand contact to ADP. G412 provides a ligand contact to ATP. K459 participates in a covalent cross-link: Glycyl lysine isopeptide (Lys-Gly) (interchain with G-Cter in SUMO1). At K466 the chain carries N6-acetyllysine. D499 contacts ADP. D499 and K504 together coordinate ATP. Phosphotyrosine is present on Y505. Positions 529–548 are disordered; sequence PAGGPKPPSGKKDWDDDQND. K534 is covalently cross-linked (Glycyl lysine isopeptide (Lys-Gly) (interchain with G-Cter in SUMO2)). S537 is subject to Phosphoserine. K539 is covalently cross-linked (Glycyl lysine isopeptide (Lys-Gly) (interchain with G-Cter in SUMO2)).

The protein belongs to the TCP-1 chaperonin family. In terms of assembly, component of the chaperonin-containing T-complex (TRiC), a hexadecamer composed of two identical back-to-back stacked rings enclosing a protein folding chamber. Each ring is made up of eight different subunits: TCP1/CCT1, CCT2, CCT3, CCT4, CCT5, CCT6A/CCT6, CCT7, CCT8. Interacts with PACRG. Interacts with DNAAF4. Interacts with synaptic plasticity regulator PANTS.

It localises to the cytoplasm. The protein localises to the cytoskeleton. It is found in the microtubule organizing center. The protein resides in the centrosome. Its subcellular location is the cilium basal body. It catalyses the reaction ATP + H2O = ADP + phosphate + H(+). Component of the chaperonin-containing T-complex (TRiC), a molecular chaperone complex that assists the folding of actin, tubulin and other proteins upon ATP hydrolysis. The TRiC complex mediates the folding of WRAP53/TCAB1, thereby regulating telomere maintenance. As part of the TRiC complex may play a role in the assembly of BBSome, a complex involved in ciliogenesis regulating transports vesicles to the cilia. This Mus musculus (Mouse) protein is T-complex protein 1 subunit theta (Cct8).